The following is a 347-amino-acid chain: Probable arabinogalactan endo-beta-1,4-galactanase A (347 aa).

Residues 1–16 form the signal peptide; the sequence is MLFSYLLATLPLLANA. The active-site Proton donor is E150. Residue E260 is the Nucleophile of the active site.

This sequence belongs to the glycosyl hydrolase 53 family.

The protein resides in the secreted. The enzyme catalyses The enzyme specifically hydrolyzes (1-&gt;4)-beta-D-galactosidic linkages in type I arabinogalactans.. In terms of biological role, endogalactanase involved in the degradation of plant cell wall polysaccharides, and more particularly of hairy regions of pectin. This is Probable arabinogalactan endo-beta-1,4-galactanase A (galA) from Aspergillus oryzae (strain ATCC 42149 / RIB 40) (Yellow koji mold).